Here is a 153-residue protein sequence, read N- to C-terminus: UPF0540 protein At1g62220 (153 aa).

Positions 1–21 are cleaved as a signal peptide; it reads MNATKFVVLLVISVLCAIVTA. Disordered regions lie at residues 63-82 and 122-153; these read SSATGFNNPKGPDANAYENG and ARANGKVASASRVKGSSEKKKGKGKKGKGKKD. Residues 122-132 show a composition bias toward low complexity; the sequence is ARANGKVASAS. Residues 141 to 153 are compositionally biased toward basic residues; the sequence is KKGKGKKGKGKKD.

It belongs to the UPF0540 family.

The sequence is that of UPF0540 protein At1g62220 from Arabidopsis thaliana (Mouse-ear cress).